Here is a 379-residue protein sequence, read N- to C-terminus: Cytochrome b (379 aa).

4 consecutive transmembrane segments (helical) span residues 33–53 (FGSLLGMCLVIQILTGLFLAM), 77–98 (WLIRYLHANGASMFFICLFIHV), 113–133 (WNIGIILLLTTMATAFVGYVL), and 178–198 (FFAFHFILPFIIAAFALVHLL). Heme b contacts are provided by His83 and His97. Heme b is bound by residues His182 and His196. His201 is an a ubiquinone binding site. The next 4 membrane-spanning stretches (helical) occupy residues 226-246 (IKDLLGIFLLLLILMALALFF), 288-308 (LGGVLALILSILILAAFPLLN), 320-340 (VTQTIYWIFIANLLVLTWIGG), and 347-367 (FTMIGQIASVTYFTIITILIP).

It belongs to the cytochrome b family. In terms of assembly, the cytochrome bc1 complex contains 11 subunits: 3 respiratory subunits (MT-CYB, CYC1 and UQCRFS1), 2 core proteins (UQCRC1 and UQCRC2) and 6 low-molecular weight proteins (UQCRH/QCR6, UQCRB/QCR7, UQCRQ/QCR8, UQCR10/QCR9, UQCR11/QCR10 and a cleavage product of UQCRFS1). This cytochrome bc1 complex then forms a dimer. It depends on heme b as a cofactor.

The protein localises to the mitochondrion inner membrane. Component of the ubiquinol-cytochrome c reductase complex (complex III or cytochrome b-c1 complex) that is part of the mitochondrial respiratory chain. The b-c1 complex mediates electron transfer from ubiquinol to cytochrome c. Contributes to the generation of a proton gradient across the mitochondrial membrane that is then used for ATP synthesis. The chain is Cytochrome b (MT-CYB) from Akodon philipmyersi (Myers' grass mouse).